A 201-amino-acid polypeptide reads, in one-letter code: MICOS complex subunit MIC27 (201 aa).

A mitochondrion-targeting transit peptide spans 1–31 (MTQDKPIVETISNAGEQVTNVFGQFWQLVTS). The Cytoplasmic portion of the chain corresponds to 32 to 117 (KNTTNNGDSK…KCNAYLTEEW (86 aa)). The chain crosses the membrane as a helical span at residues 118–138 (TALPKAAAITVGGMAGFVLGL). At 139 to 145 (KRGPVGR) the chain is on the mitochondrial intermembrane side. The helical transmembrane segment at 146 to 166 (LLTTTIGLATMAAFCYPIEAV) threads the bilayer. At 167–201 (DVAKTGRAHAEQTWYSFQESPTPSAIVKTNLSPPK) the chain is on the cytoplasmic side.

It belongs to the apolipoprotein O/MICOS complex subunit Mic27 family. In terms of assembly, component of the mitochondrial contact site and cristae organizing system (MICOS) complex.

Its subcellular location is the mitochondrion outer membrane. Functionally, sustains mitochondrial morphology probably through maintaining cristae morphology. May act as a component of the MICOS complex, a large protein complex of the mitochondria. This chain is MICOS complex subunit MIC27, found in Caenorhabditis elegans.